The primary structure comprises 339 residues: DNA-directed RNA polymerase subunit alpha (339 aa).

Positions methionine 1–glutamate 235 are alpha N-terminal domain (alpha-NTD). The interval phenylalanine 251–tyrosine 339 is alpha C-terminal domain (alpha-CTD).

Belongs to the RNA polymerase alpha chain family. In terms of assembly, homodimer. The RNAP catalytic core consists of 2 alpha, 1 beta, 1 beta' and 1 omega subunit. When a sigma factor is associated with the core the holoenzyme is formed, which can initiate transcription.

The catalysed reaction is RNA(n) + a ribonucleoside 5'-triphosphate = RNA(n+1) + diphosphate. In terms of biological role, DNA-dependent RNA polymerase catalyzes the transcription of DNA into RNA using the four ribonucleoside triphosphates as substrates. The sequence is that of DNA-directed RNA polymerase subunit alpha from Methylobacterium nodulans (strain LMG 21967 / CNCM I-2342 / ORS 2060).